We begin with the raw amino-acid sequence, 108 residues long: MIKGNMGDLMKQAQKIQEQMQKAQEELANAEVSGESGGGLIKIVMNGRHDVKKVEIDASLMQEEKEILEDLLAAAVNDAVRKVEKNNQDKMSNMTAGLGIPPNFKMPF.

The protein belongs to the YbaB/EbfC family. As to quaternary structure, homodimer.

The protein localises to the cytoplasm. It localises to the nucleoid. Its function is as follows. Binds to DNA and alters its conformation. May be involved in regulation of gene expression, nucleoid organization and DNA protection. The protein is Nucleoid-associated protein HCH_02614 of Hahella chejuensis (strain KCTC 2396).